Here is a 468-residue protein sequence, read N- to C-terminus: ATP synthase subunit beta 2 (468 aa).

Residue 155 to 162 (GGAGVGKT) coordinates ATP.

Belongs to the ATPase alpha/beta chains family. In terms of assembly, F-type ATPases have 2 components, CF(1) - the catalytic core - and CF(0) - the membrane proton channel. CF(1) has five subunits: alpha(3), beta(3), gamma(1), delta(1), epsilon(1). CF(0) has four main subunits: a(1), b(1), b'(1) and c(9-12).

Its subcellular location is the cell inner membrane. The enzyme catalyses ATP + H2O + 4 H(+)(in) = ADP + phosphate + 5 H(+)(out). Its function is as follows. Produces ATP from ADP in the presence of a proton gradient across the membrane. The catalytic sites are hosted primarily by the beta subunits. This chain is ATP synthase subunit beta 2, found in Chlorobium luteolum (strain DSM 273 / BCRC 81028 / 2530) (Pelodictyon luteolum).